The primary structure comprises 549 residues: Ankyrin repeat domain-containing protein SOWAHA (549 aa).

Residues 1–17 form the signal peptide; sequence MALAAAAAAAAAGVSQA. 2 disordered regions span residues 82 to 219 and 235 to 256; these read KPRP…PCML and EEPGLRRQLSEEPSPRSSPLLL. The span at 203–216 shows a compositional bias: low complexity; sequence PGPGAAKGPPQQKP. The span at 235–248 shows a compositional bias: basic and acidic residues; that stretch reads EEPGLRRQLSEEPS. Serine 260 carries the post-translational modification Phosphoserine. ANK repeat units follow at residues 345–374 and 384–414; these read SGFTALHWAAKSGDGEMALQLVEVARRSGA and GGYTPLHLAALHGHEDAAVLLVVRLGAQVHV. Residues 513 to 549 form a disordered region; sequence PRKKTKIRGGLPAFSEISRRPTPGPLAGLVPSLPPTT.

The protein belongs to the SOWAH family.

This is Ankyrin repeat domain-containing protein SOWAHA (SOWAHA) from Homo sapiens (Human).